The primary structure comprises 106 residues: UPF0473 protein SSU98_0068 (106 aa).

It belongs to the UPF0473 family.

The polypeptide is UPF0473 protein SSU98_0068 (Streptococcus suis (strain 98HAH33)).